We begin with the raw amino-acid sequence, 230 residues long: MATATPPPQDFPPYPPFTSLRLAAARDVAQMANLSVQGFKDSEIFRYERPGHDQYPEDAVAYFANLYRDRLEDPRAVVIVAEDWDGAERVVVGVGCWILPQDSPRTGQFVVPCVGDREPALDRDLCCRRLELFNAVTKATEERYLDGKVICDKFVVHPSYQRRGHGTAMLRWSLRLCTQDTVDQGVIPSHVGEPVYLSLGFEVIGEMHVPDEGDTQGFTQRVAVYKARQT.

An N-acetyltransferase domain is found at 143 to 230; that stretch reads RYLDGKVICD…RVAVYKARQT (88 aa).

It participates in mycotoxin biosynthesis. Its function is as follows. Acetyltransferase; part of the satratoxin SC3 cluster involved in the biosynthesis of satratoxins, trichothecene mycotoxins that are associated with human food poisonings. Satratoxins are suggested to be made by products of multiple gene clusters (SC1, SC2 and SC3) that encode 21 proteins in all, including polyketide synthases, acetyltransferases, and other enzymes expected to modify the trichothecene skeleton. SC1 encodes 10 proteins, SAT1 to SAT10. The largest are SAT8, which encodes a putative polyketide synthase (PKS) with a conventional non-reducing architecture, and SAT10, a putative protein containing four ankyrin repeats and thus may be involved in protein scaffolding. The putative short-chain reductase SAT3 may assist the PKS in some capacity. SAT6 contains a secretory lipase domain and acts probably as a trichothecene esterase. SAT5 encodes a putative acetyltransferase, and so, with SAT6, may affect endogenous protection from toxicity. The probable transcription factor SAT9 may regulate the expression of the SC1 cluster. SC2 encodes proteins SAT11 to SAT16, the largest of which encodes the putative reducing PKS SAT13. SAT11 is a cytochrome P450 monooxygenase, while SAT14 and SAT16 are probable acetyltransferases. The SC2 cluster may be regulated by the transcription factor SAT15. SC3 is a small cluster that encodes 5 proteins, SAT17 to SAT21. SAT21 is a putative MFS-type transporter which may have a role in exporting secondary metabolites. The four other proteins putatively encoded in SC3 include the taurine hydroxylase-like protein SAT17, the O-methyltransferase SAT18, the acetyltransferase SAT19, and the Cys6-type zinc finger SAT20, the latter being probably involved in regulation of SC3 expression. This Stachybotrys chartarum (strain CBS 109288 / IBT 7711) (Toxic black mold) protein is Acetyltransferase.